The primary structure comprises 492 residues: Cytochrome P450 monooxygenase ATEG_03631 (492 aa).

A helical transmembrane segment spans residues 10–30; sequence FATLNPMVVVAIPVFLFVISL. Asn309 carries N-linked (GlcNAc...) asparagine glycosylation. A heme-binding site is contributed by Cys457.

Belongs to the cytochrome P450 family. Heme is required as a cofactor.

The protein resides in the membrane. It functions in the pathway secondary metabolite biosynthesis. Its function is as follows. Cytochrome P450 monooxygenase; part of the cluster A that mediates the biosynthesis of azasperpyranones, members of the azaphilone family that exhibit anti-cancer activities. Azasperpyranones are synthesized by 2 clusters, A and B. Cluster A is responsible for the production of the polyhydric phenol moiety while the azaphilonoid scaffold is produced by the cluster B. The non-reducing polyketide synthase ATEG_03629 produces 5-methyl orsellinic acid, which is then reduced to 5-methyl orsellinic aldehyde by the NRPS-like protein ATEG_03630. 5-methyl orsellinic aldehyde is then first hydroxylated by the FAD-dependent monooxygenase ATEG_03635 and subsequently hydroxylated by the cytochrome P450 monooxygenase ATEG_03631 to produce the unstable polyhydric phenol precursor of azasperpyranones. On the other hand, the polyketide synthase ATEG_07659 is responsible for producing the 3,5-dimethyloctadienone moiety from acetyl-CoA, three malonyl-CoA, and two S-adenosyl methionines (SAM). The 3,5-dimethyloctadienone moiety is then loaded onto the SAT domain of ATEG_07661 and extended with four malonyl-CoA and one SAM, which leads to the formation of 2,4-dihydroxy-6-(5,7-dimethyl-2-oxo-trans-3-trans-5-nonadienyl)-3-methylbenzaldehyde (compound 8) after reductive release and aldol condensation. The FAD-dependent monooxygenase ATEG_07662 is the next enzyme in the biosynthesis sequence and hydroxylates the side chain at the benzylic position of compound 8. In Aspergillus nidulans, afoF, the ortholog of the FAD-dependent oxygenase ATEG_07660, is the key enzyme for the biosynthesis of asperfuranone by catalyzing the hydroxylation at C-8 of to prevent the formation of a six-membered ring hemiacetal intermediate and thus facilitating the formation of a five-membered ring to produce asperfuranone. In Aspergillus terreus, ATEG_07660 is probably not functional, which leads to the formation of the six-membered ring hemiacetal intermediate presperpyranone instead of asperfuranone. Finally, ATEG_03636 is involved in the condensation of the polyhydric phenol moiety produced by cluster A and the perasperpyranone precursor produced by cluster B, to yield azasperpyranone A. Further modifications of azasperpyranone A result in the production of derivatives, including azasperpyranone B to F. This Aspergillus terreus (strain NIH 2624 / FGSC A1156) protein is Cytochrome P450 monooxygenase ATEG_03631.